The sequence spans 552 residues: Methyl-coenzyme M reductase II subunit alpha (552 aa).

Residue glutamine 150 participates in coenzyme F430 binding. Coenzyme B is bound by residues arginine 228, 259 to 260 (KH), and arginine 273. Positions 335 and 446 each coordinate coenzyme M.

This sequence belongs to the methyl-coenzyme M reductase alpha subunit family. MCR is a hexamer of two alpha, two beta, and two gamma chains, forming a dimer of heterotrimers. It depends on coenzyme F430 as a cofactor.

It carries out the reaction coenzyme B + methyl-coenzyme M = methane + coenzyme M-coenzyme B heterodisulfide. It participates in one-carbon metabolism; methyl-coenzyme M reduction; methane from methyl-coenzyme M: step 1/1. Functionally, component of the methyl-coenzyme M reductase (MCR) I that catalyzes the reductive cleavage of methyl-coenzyme M (CoM-S-CH3 or 2-(methylthio)ethanesulfonate) using coenzyme B (CoB or 7-mercaptoheptanoylthreonine phosphate) as reductant which results in the production of methane and the mixed heterodisulfide of CoB and CoM (CoM-S-S-CoB). This is the final step in methanogenesis. In Methanocaldococcus jannaschii (strain ATCC 43067 / DSM 2661 / JAL-1 / JCM 10045 / NBRC 100440) (Methanococcus jannaschii), this protein is Methyl-coenzyme M reductase II subunit alpha (mrtA).